The primary structure comprises 313 residues: Porphobilinogen deaminase (313 aa).

The residue at position 242 (Cys-242) is an S-(dipyrrolylmethanemethyl)cysteine.

Belongs to the HMBS family. As to quaternary structure, monomer. Dipyrromethane serves as cofactor.

It carries out the reaction 4 porphobilinogen + H2O = hydroxymethylbilane + 4 NH4(+). The protein operates within porphyrin-containing compound metabolism; protoporphyrin-IX biosynthesis; coproporphyrinogen-III from 5-aminolevulinate: step 2/4. Functionally, tetrapolymerization of the monopyrrole PBG into the hydroxymethylbilane pre-uroporphyrinogen in several discrete steps. In Marinobacter nauticus (strain ATCC 700491 / DSM 11845 / VT8) (Marinobacter aquaeolei), this protein is Porphobilinogen deaminase.